The primary structure comprises 825 residues: AMP deaminase 2 (825 aa).

The disordered stretch occupies residues 1-49 (MASYPSGSGKPKAKYPFKKRASLQASTAAPEARGGLGAPPLQSARSLPG). Positions 11–21 (PKAKYPFKKRA) are enriched in basic residues. Serine 22 is subject to Phosphoserine. Residue arginine 45 is modified to Omega-N-methylarginine. Phosphoserine occurs at positions 46, 64, and 80. Tyrosine 91 is subject to Phosphotyrosine. Phosphoserine is present on residues serine 97 and serine 114. Phosphothreonine is present on threonine 134. Residues serine 136 and serine 138 each carry the phosphoserine modification. Zn(2+) contacts are provided by histidine 364 and histidine 366. Substrate is bound by residues histidine 366 and 435–440 (KFNAKY). Histidine 633 serves as a coordination point for Zn(2+). Glutamate 636 provides a ligand contact to substrate. Histidine 655 functions as the Proton acceptor in the catalytic mechanism. Aspartate 710 provides a ligand contact to Zn(2+). Position 711–714 (711–714 (DPLQ)) interacts with substrate.

The protein belongs to the metallo-dependent hydrolases superfamily. Adenosine and AMP deaminases family. As to quaternary structure, homotetramer. Zn(2+) is required as a cofactor. Highly expressed in cerebellum.

The enzyme catalyses AMP + H2O + H(+) = IMP + NH4(+). Its pathway is purine metabolism; IMP biosynthesis via salvage pathway; IMP from AMP: step 1/1. Functionally, AMP deaminase plays a critical role in energy metabolism. Catalyzes the deamination of AMP to IMP and plays an important role in the purine nucleotide cycle. This is AMP deaminase 2 from Homo sapiens (Human).